Consider the following 355-residue polypeptide: Molybdenum import ATP-binding protein ModC (355 aa).

The region spanning 1–233 is the ABC transporter domain; that stretch reads MTLIVEAKQR…PSAAADRKEA (233 aa). 31-38 lines the ATP pocket; it reads GRSGSGKT. In terms of domain architecture, Mop spans 291-355; sequence GLSALNILEG…AIIKTVALEG (65 aa).

The protein belongs to the ABC transporter superfamily. Molybdate importer (TC 3.A.1.8) family. In terms of assembly, the complex is composed of two ATP-binding proteins (ModC), two transmembrane proteins (ModB) and a solute-binding protein (ModA).

The protein localises to the cell inner membrane. It catalyses the reaction molybdate(out) + ATP + H2O = molybdate(in) + ADP + phosphate + H(+). In terms of biological role, part of the ABC transporter complex ModABC involved in molybdenum import. Responsible for energy coupling to the transport system. The sequence is that of Molybdenum import ATP-binding protein ModC from Rhizobium etli (strain ATCC 51251 / DSM 11541 / JCM 21823 / NBRC 15573 / CFN 42).